Consider the following 344-residue polypeptide: Dihydroorotase (344 aa).

Positions 14 and 16 each coordinate Zn(2+). Substrate contacts are provided by residues 16–18 (HLR) and N42. The Zn(2+) site is built by K100, H137, and H175. K100 bears the N6-carboxylysine mark. H137 contributes to the substrate binding site. Residue L220 participates in substrate binding. D248 lines the Zn(2+) pocket. D248 is a catalytic residue. Positions 252 and 264 each coordinate substrate.

This sequence belongs to the metallo-dependent hydrolases superfamily. DHOase family. Class II DHOase subfamily. As to quaternary structure, homodimer. It depends on Zn(2+) as a cofactor.

The catalysed reaction is (S)-dihydroorotate + H2O = N-carbamoyl-L-aspartate + H(+). It functions in the pathway pyrimidine metabolism; UMP biosynthesis via de novo pathway; (S)-dihydroorotate from bicarbonate: step 3/3. Its function is as follows. Catalyzes the reversible cyclization of carbamoyl aspartate to dihydroorotate. The sequence is that of Dihydroorotase from Cupriavidus necator (strain ATCC 17699 / DSM 428 / KCTC 22496 / NCIMB 10442 / H16 / Stanier 337) (Ralstonia eutropha).